We begin with the raw amino-acid sequence, 277 residues long: Shikimate dehydrogenase (NADP(+)) (277 aa).

Residues 15-17 (SLS) and Thr-62 each bind shikimate. Residue Lys-66 is the Proton acceptor of the active site. The shikimate site is built by Asn-87 and Asp-102. NADP(+) contacts are provided by residues 127-131 (GSGGA), 151-156 (NRTVDK), and Ile-219. Residue Tyr-221 coordinates shikimate. Gly-242 lines the NADP(+) pocket.

Belongs to the shikimate dehydrogenase family. In terms of assembly, homodimer.

The catalysed reaction is shikimate + NADP(+) = 3-dehydroshikimate + NADPH + H(+). It functions in the pathway metabolic intermediate biosynthesis; chorismate biosynthesis; chorismate from D-erythrose 4-phosphate and phosphoenolpyruvate: step 4/7. In terms of biological role, involved in the biosynthesis of the chorismate, which leads to the biosynthesis of aromatic amino acids. Catalyzes the reversible NADPH linked reduction of 3-dehydroshikimate (DHSA) to yield shikimate (SA). The sequence is that of Shikimate dehydrogenase (NADP(+)) from Bacillus cereus (strain B4264).